A 514-amino-acid polypeptide reads, in one-letter code: L-carnitine/gamma-butyrobetaine antiporter (514 aa).

Topologically, residues 1–11 (MSKDNKKAGIE) are cytoplasmic. Residues 12–30 (PKVFFPPLIIVGILCWLTV) form a helical membrane-spanning segment. Residues 31–42 (RDLDASNEVINA) are Periplasmic-facing. A helical membrane pass occupies residues 43 to 68 (VFSYVTNVWGWAFEWYMVIMFGGWFW). Residues 69–91 (LVFGRYAKKRLGDEKPEFSTASW) lie on the Cytoplasmic side of the membrane. Residues 92-112 (IFMMFASCTSAAVLFWGSIEI) form a helical membrane-spanning segment. Over 113 to 131 (YYYISSPPFGMEGYSAPAK) the chain is Periplasmic. Residues 132-154 (EIGLAYSLFHWGPLPWATYSFLS) traverse the membrane as a helical segment. Topologically, residues 155-185 (VAFAYFFFVRKMEVIRPSSTLTPLVGEKHVN) are cytoplasmic. The helical transmembrane segment at 186–216 (GLFGTVVDNFYLVALILAMGTSLGLATPLVT) threads the bilayer. Topologically, residues 217 to 230 (ECIQYLFGIPHTLQ) are periplasmic. The helical transmembrane segment at 231-249 (LDAIIISCWILLNAICVAF) threads the bilayer. The Cytoplasmic segment spans residues 250–251 (GL). Residues 252 to 277 (QKGVKIASDVRTYLSFLMLGWVFIVG) traverse the membrane as a helical segment. Residues 278–311 (GASFIVNYFTDSVGTLLMYMPRMLFYTDPIGKGG) lie on the Periplasmic side of the membrane. The helical transmembrane segment at 312–335 (FPQAWTVFYWAWWVIYAIQMSIFL) threads the bilayer. At 336–347 (ARISKGRTVREL) the chain is on the cytoplasmic side. Residues 348-369 (CLGMVSGLTAGTWLIWTILGGN) form a helical membrane-spanning segment. Residues 370-404 (TLQLIDQNILNIPQLIDQYGVPRAIIETWAALPLS) are Periplasmic-facing. Residues 405-434 (TATMWGFFILCFIATVTLINACSYTLAMST) form a helical membrane-spanning segment. The Cytoplasmic portion of the chain corresponds to 435–445 (CRSMKEGAEPP). Residues 446–464 (LLVRIGWSVLVGIIGIILL) traverse the membrane as a helical segment. Over 465 to 468 (ALGG) the chain is Periplasmic. Residues 469 to 492 (LKPIQTAIIAGGCPLFFVNIMVTL) form a helical membrane-spanning segment. Over 493-514 (SFIKDAKVHWKDCSPYTQKMTH) the chain is Cytoplasmic.

This sequence belongs to the BCCT transporter (TC 2.A.15) family. CaiT subfamily. Homotrimer.

Its subcellular location is the cell inner membrane. It catalyses the reaction 4-(trimethylamino)butanoate(in) + (R)-carnitine(out) = 4-(trimethylamino)butanoate(out) + (R)-carnitine(in). Its pathway is amine and polyamine metabolism; carnitine metabolism. Catalyzes the exchange of L-carnitine for gamma-butyrobetaine. The polypeptide is L-carnitine/gamma-butyrobetaine antiporter (Proteus mirabilis (strain HI4320)).